The primary structure comprises 188 residues: Cytidylate kinase (188 aa).

Residue 7 to 15 (GKIGSGKST) coordinates ATP.

It belongs to the cytidylate kinase family. Type 2 subfamily.

Its subcellular location is the cytoplasm. It catalyses the reaction CMP + ATP = CDP + ADP. The catalysed reaction is dCMP + ATP = dCDP + ADP. The protein is Cytidylate kinase (cmk) of Thermoplasma acidophilum (strain ATCC 25905 / DSM 1728 / JCM 9062 / NBRC 15155 / AMRC-C165).